The sequence spans 87 residues: Small ribosomal subunit protein uS17 (87 aa).

Belongs to the universal ribosomal protein uS17 family. As to quaternary structure, part of the 30S ribosomal subunit.

Its function is as follows. One of the primary rRNA binding proteins, it binds specifically to the 5'-end of 16S ribosomal RNA. This chain is Small ribosomal subunit protein uS17, found in Staphylococcus carnosus (strain TM300).